The primary structure comprises 461 residues: ATP synthase subunit beta (461 aa).

149–156 (GGAGVGKT) contacts ATP.

The protein belongs to the ATPase alpha/beta chains family. In terms of assembly, F-type ATPases have 2 components, CF(1) - the catalytic core - and CF(0) - the membrane proton channel. CF(1) has five subunits: alpha(3), beta(3), gamma(1), delta(1), epsilon(1). CF(0) has three main subunits: a(1), b(2) and c(9-12). The alpha and beta chains form an alternating ring which encloses part of the gamma chain. CF(1) is attached to CF(0) by a central stalk formed by the gamma and epsilon chains, while a peripheral stalk is formed by the delta and b chains.

The protein localises to the cell membrane. The catalysed reaction is ATP + H2O + 4 H(+)(in) = ADP + phosphate + 5 H(+)(out). Its function is as follows. Produces ATP from ADP in the presence of a proton gradient across the membrane. The catalytic sites are hosted primarily by the beta subunits. This is ATP synthase subunit beta from Caldanaerobacter subterraneus subsp. tengcongensis (strain DSM 15242 / JCM 11007 / NBRC 100824 / MB4) (Thermoanaerobacter tengcongensis).